Consider the following 320-residue polypeptide: Cytochrome c biogenesis protein CcsA (320 aa).

The next 8 helical transmembrane spans lie at 13–33 (ISFS…FLLV), 46–66 (GMIV…IYSG), 73–93 (LYES…VSYL), 102–122 (LSAI…SGLL), 147–167 (MVLG…LLVI), 226–246 (IISL…VWAN), 259–274 (ETWA…IYFH), and 289–309 (VASM…LLGI).

The protein belongs to the CcmF/CycK/Ccl1/NrfE/CcsA family. As to quaternary structure, may interact with Ccs1.

It is found in the plastid. The protein localises to the chloroplast thylakoid membrane. Required during biogenesis of c-type cytochromes (cytochrome c6 and cytochrome f) at the step of heme attachment. In Gossypium hirsutum (Upland cotton), this protein is Cytochrome c biogenesis protein CcsA.